A 264-amino-acid chain; its full sequence is tRNA pseudouridine synthase A (264 aa).

Aspartate 51 (nucleophile) is an active-site residue. Tyrosine 109 is a substrate binding site.

The protein belongs to the tRNA pseudouridine synthase TruA family. As to quaternary structure, homodimer.

The enzyme catalyses uridine(38/39/40) in tRNA = pseudouridine(38/39/40) in tRNA. Functionally, formation of pseudouridine at positions 38, 39 and 40 in the anticodon stem and loop of transfer RNAs. This is tRNA pseudouridine synthase A from Vibrio atlanticus (strain LGP32) (Vibrio splendidus (strain Mel32)).